Here is a 365-residue protein sequence, read N- to C-terminus: DNA replication and repair protein RecF (365 aa).

Residue 23-30 (GPNGIGKS) coordinates ATP.

The protein belongs to the RecF family.

The protein resides in the cytoplasm. Its function is as follows. The RecF protein is involved in DNA metabolism; it is required for DNA replication and normal SOS inducibility. RecF binds preferentially to single-stranded, linear DNA. It also seems to bind ATP. This Parasynechococcus marenigrum (strain WH8102) protein is DNA replication and repair protein RecF.